A 185-amino-acid polypeptide reads, in one-letter code: Ribosome-recycling factor (185 aa).

This sequence belongs to the RRF family.

It is found in the cytoplasm. Its function is as follows. Responsible for the release of ribosomes from messenger RNA at the termination of protein biosynthesis. May increase the efficiency of translation by recycling ribosomes from one round of translation to another. The protein is Ribosome-recycling factor of Arthrobacter sp. (strain FB24).